Here is a 454-residue protein sequence, read N- to C-terminus: Bifunctional protein GlmU (454 aa).

The tract at residues 1 to 226 (MSLNVVILAA…AIEVEGANNR (226 aa)) is pyrophosphorylase. UDP-N-acetyl-alpha-D-glucosamine is bound by residues 8–11 (LAAG), Lys22, Gln73, 78–79 (GT), 100–102 (YGD), Gly137, Glu151, Asn166, and Asn224. Position 102 (Asp102) interacts with Mg(2+). Position 224 (Asn224) interacts with Mg(2+). Residues 227-247 (VQLAQLERAYQARAAEKMMLE) form a linker region. Residues 248–454 (GANLRDPARI…GWQRPIKIKK (207 aa)) form an N-acetyltransferase region. UDP-N-acetyl-alpha-D-glucosamine-binding residues include Arg330 and Lys348. His360 serves as the catalytic Proton acceptor. Tyr363 and Asn374 together coordinate UDP-N-acetyl-alpha-D-glucosamine. Residues Ala377, 383 to 384 (NY), Ser402, Ala420, and Arg437 contribute to the acetyl-CoA site.

In the N-terminal section; belongs to the N-acetylglucosamine-1-phosphate uridyltransferase family. The protein in the C-terminal section; belongs to the transferase hexapeptide repeat family. In terms of assembly, homotrimer. Requires Mg(2+) as cofactor.

It localises to the cytoplasm. The catalysed reaction is alpha-D-glucosamine 1-phosphate + acetyl-CoA = N-acetyl-alpha-D-glucosamine 1-phosphate + CoA + H(+). It catalyses the reaction N-acetyl-alpha-D-glucosamine 1-phosphate + UTP + H(+) = UDP-N-acetyl-alpha-D-glucosamine + diphosphate. It participates in nucleotide-sugar biosynthesis; UDP-N-acetyl-alpha-D-glucosamine biosynthesis; N-acetyl-alpha-D-glucosamine 1-phosphate from alpha-D-glucosamine 6-phosphate (route II): step 2/2. Its pathway is nucleotide-sugar biosynthesis; UDP-N-acetyl-alpha-D-glucosamine biosynthesis; UDP-N-acetyl-alpha-D-glucosamine from N-acetyl-alpha-D-glucosamine 1-phosphate: step 1/1. It functions in the pathway bacterial outer membrane biogenesis; LPS lipid A biosynthesis. In terms of biological role, catalyzes the last two sequential reactions in the de novo biosynthetic pathway for UDP-N-acetylglucosamine (UDP-GlcNAc). The C-terminal domain catalyzes the transfer of acetyl group from acetyl coenzyme A to glucosamine-1-phosphate (GlcN-1-P) to produce N-acetylglucosamine-1-phosphate (GlcNAc-1-P), which is converted into UDP-GlcNAc by the transfer of uridine 5-monophosphate (from uridine 5-triphosphate), a reaction catalyzed by the N-terminal domain. This is Bifunctional protein GlmU from Shewanella frigidimarina (strain NCIMB 400).